Consider the following 393-residue polypeptide: Elongation factor Tu (393 aa).

The tr-type G domain occupies 10-203 (KPHVNIGTIG…AVDSYIPEPV (194 aa)). Residues 19–26 (GHVDHGKT) are G1. Residue 19 to 26 (GHVDHGKT) participates in GTP binding. T26 provides a ligand contact to Mg(2+). The tract at residues 60–64 (GITIS) is G2. Residues 81 to 84 (DCPG) form a G3 region. Residues 81–85 (DCPGH) and 136–139 (NKVD) each bind GTP. The interval 136–139 (NKVD) is G4. The interval 173–175 (SAL) is G5.

This sequence belongs to the TRAFAC class translation factor GTPase superfamily. Classic translation factor GTPase family. EF-Tu/EF-1A subfamily. In terms of assembly, monomer.

The protein localises to the cytoplasm. The enzyme catalyses GTP + H2O = GDP + phosphate + H(+). In terms of biological role, GTP hydrolase that promotes the GTP-dependent binding of aminoacyl-tRNA to the A-site of ribosomes during protein biosynthesis. In Prosthecochloris aestuarii (strain DSM 271 / SK 413), this protein is Elongation factor Tu.